A 119-amino-acid chain; its full sequence is MARFVVVPLFVLLSLFGLEAIQHPPKIQVYSRYPADNGKPNFLNCYVSGFHPSDIEVDLLKNGKKIEKVEHSDLSFSKDWSFYLLYYTEFTPNEKDEYACRVSHVTFSTPKTVKWDRNM.

A signal peptide spans 1–20 (MARFVVVPLFVLLSLFGLEA). The Ig-like C1-type domain maps to 25–114 (PKIQVYSRYP…VTFSTPKTVK (90 aa)). C45 and C100 are joined by a disulfide.

This sequence belongs to the beta-2-microglobulin family. Heterodimer of an alpha chain and a beta chain. Beta-2-microglobulin is the beta-chain of major histocompatibility complex class I molecules.

The protein resides in the secreted. Functionally, component of the class I major histocompatibility complex (MHC). Involved in the presentation of peptide antigens to the immune system. This chain is Beta-2-microglobulin (B2M), found in Saguinus niger (Black tamarin).